We begin with the raw amino-acid sequence, 2126 residues long: Polycystin family receptor for egg jelly (2126 aa).

Residues 1–18 (MWPGPALLLLGLGLGLGS) form the signal peptide. The Extracellular segment spans residues 19 to 1068 (QPPPTGPRGL…AIISNLTQNP (1050 aa)). The interval 20–71 (PPPTGPRGLPGVLRGAPGLGQGAESSVRGGDTGGLSPRAAPRHASPTPPRRC) is disordered. N-linked (GlcNAc...) asparagine glycans are attached at residues asparagine 84, asparagine 94, asparagine 129, asparagine 192, asparagine 243, asparagine 325, asparagine 571, asparagine 761, asparagine 774, asparagine 807, asparagine 849, asparagine 888, asparagine 960, and asparagine 1063. The 696-residue stretch at 102–797 (CIMQPVKINR…SMMFCEFADD (696 aa)) folds into the REJ domain. Residues 1069–1089 (ATFLAVLFIMILYAILAFWAL) form a helical membrane-spanning segment. At 1090 to 1273 (HRDVIDLYFR…VPKPFNRLQR (184 aa)) the chain is on the cytoplasmic side. The 118-residue stretch at 1114–1231 (LCYLVTIFTG…TLDATFSVTN (118 aa)) folds into the PLAT domain. Residues 1274-1294 (LSCCLAMLLSSLVCNIMFFNL) form a helical membrane-spanning segment. Residues 1295–1311 (NQKEKIESRHMHIIRSM) are Extracellular-facing. A helical membrane pass occupies residues 1312–1332 (LIGIESVVITIPVQLLITFFF). Residues 1333–1449 (TYSQKNLKMN…KTQIILPRWC (117 aa)) lie on the Cytoplasmic side of the membrane. A disordered region spans residues 1379-1431 (RAAVSTSAPEEKEAFETSQKHEKADTQMSNKNSSNNNQEASEGVPPKAFSSQP). Over residues 1387 to 1403 (PEEKEAFETSQKHEKAD) the composition is skewed to basic and acidic residues. Residues 1450-1470 (VYIAWFLVFATSGISSFFIVF) traverse the membrane as a helical segment. Residues 1471–1483 (YGVTYGYAKSIEW) are Extracellular-facing. The helical transmembrane segment at 1484–1504 (LFASFCSFCQSVFLVQPCNIL) threads the bilayer. Residues 1505–1580 (LRSGTRSYKP…RRENRIRRRS (76 aa)) are Cytoplasmic-facing. The helical transmembrane segment at 1581 to 1601 (FLFLSYLVTHFIFLTLLLLLI) threads the bilayer. Over 1602 to 1838 (FSLRHNDSFY…DFNRKTSSEI (237 aa)) the chain is Extracellular. N-linked (GlcNAc...) asparagine glycosylation is found at asparagine 1607, asparagine 1676, asparagine 1766, and asparagine 1817. A helical membrane pass occupies residues 1839–1859 (YLYAAILIFFCAYVVDEGYII). Residues 1860 to 1875 (RQERASYIRSVYNLLN) are Cytoplasmic-facing. Residues 1876 to 1896 (FSLKCMFALLIVLFFWKYFLA) traverse the membrane as a helical segment. Over 1897–1918 (TKMVQLYLADPEAFIPFHAVSR) the chain is Extracellular. The chain crosses the membrane as a helical span at residues 1919 to 1939 (VDHFMRIILAFLLFLTILKTL). The Cytoplasmic portion of the chain corresponds to 1940–1964 (RYSRFFYNVRLAQKAIQAALPGICH). A helical transmembrane segment spans residues 1965 to 1985 (TALVVSIYSFMYVAFGYLVFG). Residues 1986-2019 (QHEWNYSNMIHATQTIFSYCVSAFQNTEFSGNKV) are Extracellular-facing. A helical membrane pass occupies residues 2020–2040 (LGVLFLSSFMLVMICIFINLF). Residues 2041 to 2126 (QAVILSAYDE…NGKKMIYLVV (86 aa)) lie on the Cytoplasmic side of the membrane.

This sequence belongs to the polycystin family. In terms of tissue distribution, exclusively expressed in testis.

The protein resides in the cell membrane. It is found in the cytoplasmic vesicle. Its subcellular location is the secretory vesicle. The protein localises to the acrosome membrane. It localises to the nucleus. Testis-specific protein that controls sperm transport and the timing of zona pellucida-evoked exocytosis of the sperm acrosome. The protein is Polycystin family receptor for egg jelly (Pkdrej) of Mus musculus (Mouse).